The following is a 170-amino-acid chain: Pollen-specific protein C13 (170 aa).

The signal sequence occupies residues 1–27; the sequence is MASVPAPATTTAAVILCLCVVLSCAAA. 3 cysteine pairs are disulfide-bonded: Cys43–Cys114, Cys46–Cys155, and Cys67–Cys102. Residue Asn53 is glycosylated (N-linked (GlcNAc...) asparagine).

It belongs to the Ole e I family. Pollen.

This chain is Pollen-specific protein C13 (MGS1), found in Zea mays (Maize).